The primary structure comprises 585 residues: Arginine--tRNA ligase (585 aa).

The 'HIGH' region signature appears at 130-140 (ANPTGPMHVGH).

The protein belongs to the class-I aminoacyl-tRNA synthetase family. In terms of assembly, monomer.

The protein resides in the cytoplasm. The catalysed reaction is tRNA(Arg) + L-arginine + ATP = L-arginyl-tRNA(Arg) + AMP + diphosphate. This is Arginine--tRNA ligase from Methylorubrum extorquens (strain PA1) (Methylobacterium extorquens).